The primary structure comprises 396 residues: MEHALQEIKRGADELLVEAELVEKLKTGRPLRIKAGFDPTAPDLHLGHTVLLNKLRQFQVLGHRIVFLIGDFTGMIGDPTGKNATRPPLTREAVAENAKTYQEQVFKVLDPALTEVRFNSEWMEGLGSVGMIRLAATHTVARMLERDDFQKRYSSQKPIAIHEFLYPLIQGYDSVELKADVELGGTDQKFNLLMGRELQKHYGQPPQCILTMPLLEGTDGVNKMSKSLGNYIGINEAPGQIFGKLMSISDALMWRYIDLLSFESIARIEGWRSDVAAGLNPREVKVAFAQEIVGRFHGDKAARDAVAEFEARFQRGVLPDDMPEVDLHGIDGGLPVPQLLKQAGLVSSTSDAIRQIAGGGVRLDGERVTDKGQSVPAGATVVAQVGKRKFARVTVI.

The 'HIGH' region motif lies at 39-48; sequence PTAPDLHLGH. A 'KMSKS' region motif is present at residues 223-227; it reads KMSKS. K226 contacts ATP. In terms of domain architecture, S4 RNA-binding spans 334–395; sequence LPVPQLLKQA…GKRKFARVTV (62 aa).

It belongs to the class-I aminoacyl-tRNA synthetase family. TyrS type 2 subfamily. In terms of assembly, homodimer.

It is found in the cytoplasm. The enzyme catalyses tRNA(Tyr) + L-tyrosine + ATP = L-tyrosyl-tRNA(Tyr) + AMP + diphosphate + H(+). Its function is as follows. Catalyzes the attachment of tyrosine to tRNA(Tyr) in a two-step reaction: tyrosine is first activated by ATP to form Tyr-AMP and then transferred to the acceptor end of tRNA(Tyr). The sequence is that of Tyrosine--tRNA ligase from Thiobacillus denitrificans (strain ATCC 25259 / T1).